A 381-amino-acid chain; its full sequence is Probable tRNA sulfurtransferase (381 aa).

Residues 52-155 (LTNLDALKYV…DASTYIFIDY (104 aa)) form the THUMP domain. Residues 173-174 (LM), 198-199 (NF), Arg255, Gly277, and Gln286 each bind ATP.

It belongs to the ThiI family.

The protein localises to the cytoplasm. It carries out the reaction [ThiI sulfur-carrier protein]-S-sulfanyl-L-cysteine + a uridine in tRNA + 2 reduced [2Fe-2S]-[ferredoxin] + ATP + H(+) = [ThiI sulfur-carrier protein]-L-cysteine + a 4-thiouridine in tRNA + 2 oxidized [2Fe-2S]-[ferredoxin] + AMP + diphosphate. The catalysed reaction is [ThiS sulfur-carrier protein]-C-terminal Gly-Gly-AMP + S-sulfanyl-L-cysteinyl-[cysteine desulfurase] + AH2 = [ThiS sulfur-carrier protein]-C-terminal-Gly-aminoethanethioate + L-cysteinyl-[cysteine desulfurase] + A + AMP + 2 H(+). The protein operates within cofactor biosynthesis; thiamine diphosphate biosynthesis. Catalyzes the ATP-dependent transfer of a sulfur to tRNA to produce 4-thiouridine in position 8 of tRNAs, which functions as a near-UV photosensor. Also catalyzes the transfer of sulfur to the sulfur carrier protein ThiS, forming ThiS-thiocarboxylate. This is a step in the synthesis of thiazole, in the thiamine biosynthesis pathway. The sulfur is donated as persulfide by IscS. The sequence is that of Probable tRNA sulfurtransferase from Metamycoplasma arthritidis (strain 158L3-1) (Mycoplasma arthritidis).